The primary structure comprises 489 residues: NADH-quinone oxidoreductase subunit N (489 aa).

The next 14 helical transmembrane spans lie at 15-35, 44-64, 78-98, 106-126, 131-151, 166-186, 209-229, 244-264, 278-298, 306-326, 333-353, 378-398, 412-432, and 459-479; these read APLL…VFFI, GYLA…LWGV, FALT…TMSL, IEQG…ILLA, LIVL…LTGF, LVLG…IFGA, LTLL…KVAL, PTPV…AALV, WLPV…LGAV, MLAY…MVAG, AFLF…AVLI, LAVA…MAGF, GLPW…FFYL, and IALA…VFAL.

It belongs to the complex I subunit 2 family. In terms of assembly, NDH-1 is composed of 14 different subunits. Subunits NuoA, H, J, K, L, M, N constitute the membrane sector of the complex.

Its subcellular location is the cell membrane. The catalysed reaction is a quinone + NADH + 5 H(+)(in) = a quinol + NAD(+) + 4 H(+)(out). Its function is as follows. NDH-1 shuttles electrons from NADH, via FMN and iron-sulfur (Fe-S) centers, to quinones in the respiratory chain. The immediate electron acceptor for the enzyme in this species is believed to be ubiquinone. Couples the redox reaction to proton translocation (for every two electrons transferred, four hydrogen ions are translocated across the cytoplasmic membrane), and thus conserves the redox energy in a proton gradient. The protein is NADH-quinone oxidoreductase subunit N of Chloroflexus aggregans (strain MD-66 / DSM 9485).